Consider the following 517-residue polypeptide: L-amino-acid oxidase (517 aa).

An N-terminal signal peptide occupies residues 1-18 (MNVFFMFSLLFLAALGSC). A disulfide bridge connects residues Cys29 and Cys192. FAD is bound by residues 62 to 63 (MA), 82 to 83 (EA), Arg90, and 106 to 109 (GPMR). Residue Arg109 coordinates substrate. A glycan (N-linked (GlcNAc...) asparagine) is linked at Asn191. Position 280 (Val280) interacts with FAD. Cysteines 350 and 431 form a disulfide. Tyr391 lines the substrate pocket. FAD contacts are provided by residues Glu476 and 483–488 (GWLDST). A substrate-binding site is contributed by 483–484 (GW).

Belongs to the flavin monoamine oxidase family. FIG1 subfamily. Homodimer; non-covalently linked. The cofactor is FAD. In terms of processing, N-glycosylated. As to expression, expressed by the venom gland.

It localises to the secreted. It carries out the reaction an L-alpha-amino acid + O2 + H2O = a 2-oxocarboxylate + H2O2 + NH4(+). Its function is as follows. Catalyzes an oxidative deamination of predominantly hydrophobic and aromatic L-amino acids, thus producing hydrogen peroxide that may contribute to the diverse toxic effects of this enzyme. Exhibits diverse biological activities, such as hemorrhage, hemolysis, edema, apoptosis of vascular endothelial cells or tumor cell lines, antiparasitic activities, as well as regulation of platelet aggregation. Effects of snake L-amino oxidases on platelets are controversial, since they either induce aggregation or inhibit agonist-induced aggregation. These different effects are probably due to different experimental conditions. This protein has antibacterial activities. The protein is L-amino-acid oxidase of Pseudechis australis (Mulga snake).